The chain runs to 458 residues: Histone acetyltransferase Tip60 homolog (458 aa).

Residues 1–24 (MTEPKKEIIEDENHGISKKIPTDP) are disordered. Positions 30–86 (VTEGCRLLVMMASQEEERWAEVISRCRAANGSIKFYVHYIDCNRRLDEWVQSDRLNL) constitute a Tudor-knot domain. Positions 94–123 (KGGKKGAHLREENRDSNENEGKKSGRKRKI) are disordered. Positions 101-116 (HLREENRDSNENEGKK) are enriched in basic and acidic residues. Residues 168 to 446 (TRIRNVECIE…INPAALQWRP (279 aa)) enclose the MYST-type HAT domain. Residues 201–226 (IYICEFCLKYLKSKTCLKRHMEKCAM) form a C2HC MYST-type zinc finger. Lysine 268 is modified (N6-acetyllysine; by autocatalysis). Residues 311 to 313 (ILV) and 318 to 324 (QKKGYGS) each bind acetyl-CoA. Residue glutamate 344 is the Proton donor/acceptor of the active site. 2 residues coordinate acetyl-CoA: serine 348 and serine 357.

It belongs to the MYST (SAS/MOZ) family. As to quaternary structure, interacts with transcription-associated protein trr-1. Probably a component of a complex with histone acetyltransferase (HAT) activity, at least composed of mys-1 and trr-1. Post-translationally, autoacetylation at Lys-268 is required for binding histones with high affinity and for proper function.

It localises to the nucleus. It catalyses the reaction L-lysyl-[protein] + acetyl-CoA = N(6)-acetyl-L-lysyl-[protein] + CoA + H(+). Probable catalytic subunit of the Tip60 chromatin-remodeling complex. Plays a role in acetylation of nucleosomal histone H4 and perhaps also H2A, probably acting as a component of the Tip60 histone acetyltransferase complex. Acts in the determination of vulval and distal tip cell (DTC) precursor cell fates. Involved in the positive regulation of transcription factor daf-16, probably acting by histone acetylation; thereby modulating stress resistance. This chain is Histone acetyltransferase Tip60 homolog, found in Caenorhabditis elegans.